The chain runs to 342 residues: Aquaporin-7 (342 aa).

Over 1–36 the chain is Cytoplasmic; the sequence is MVQASGHRRSTRGSKMVSWSVIAKIQEILQRKMVRE. Serine 20 bears the Phosphoserine mark. The chain crosses the membrane as a helical span at residues 37 to 54; the sequence is FLAEFMSTYVMMVFGLGS. Over 55-67 the chain is Extracellular; it reads VAHMVLNKKYGSY. The helical transmembrane segment at 68–85 threads the bilayer; the sequence is LGVNLGFGFGVTMGVHVA. Over 86–89 the chain is Cytoplasmic; the sequence is GRIS. Residues 90-103 constitute an intramembrane region (discontinuously helical); that stretch reads GAHMNAAVTFANCA. An NPA 1 motif is present at residues 94–96; sequence NAA. Residues 104 to 111 are Cytoplasmic-facing; sequence LGRVPWRK. The chain crosses the membrane as a helical span at residues 112-132; that stretch reads FPVYVLGQFLGSFLAAATIYS. Residues 133-170 are Extracellular-facing; sequence LFYTAILHFSGGQLMVTGPVATAGIFATYLPDHMTLWR. The helical transmembrane segment at 171–188 threads the bilayer; it reads GFLNEAWLTGMLQLCLFA. Residues 189-200 are Cytoplasmic-facing; it reads ITDQENNPALPG. The helical transmembrane segment at 201–217 threads the bilayer; the sequence is TEALVIGILVVIIGVSL. Over 218 to 221 the chain is Extracellular; it reads GMNT. Residues 222–235 constitute an intramembrane region (discontinuously helical); the sequence is GYAINPSRDLPPRI. Residues 226–228 carry the NPA 2 motif; the sequence is NPS. The Extracellular portion of the chain corresponds to 236–253; that stretch reads FTFIAGWGKQVFSNGENW. Residues 254-275 form a helical membrane-spanning segment; the sequence is WWVPVVAPLLGAYLGGIIYLVF. Topologically, residues 276–342 are cytoplasmic; that stretch reads IGSTIPREPL…LHESMALEHF (67 aa).

The protein belongs to the MIP/aquaporin (TC 1.A.8) family. Homotetramer; each monomer provides an independent glycerol/water pore. Two homotetramers on opposing membranes can dimerize, forming a cell-cell junction. Interacts with PLIN1. In terms of processing, phosphorylation by PKA could prevent the interaction with PLIN1. As to expression, detected in the sperm head (at protein level). Detected in white adipose tissue.

It is found in the cell membrane. The protein resides in the cytoplasmic vesicle membrane. It localises to the lipid droplet. It carries out the reaction glycerol(in) = glycerol(out). The enzyme catalyses H2O(in) = H2O(out). It catalyses the reaction urea(in) = urea(out). Its activity is regulated as follows. Glycerol transport is regulated by pH, with the porin being permeable to glycerol at pH 7.4 but not at pH 5.5. Water permeability, however, is not influenced by pH. Inhibited by mercury ions. Its function is as follows. Aquaglyceroporins form homotetrameric transmembrane channels, with each monomer independently mediating glycerol and water transport across the plasma membrane along their osmotic gradient. Could also be permeable to urea. Mediates the efflux of glycerol, formed upon triglyceride hydrolysis, to avoid its accumulation in adipocytes and to make it available to other tissues. In the kidney, mediates the reabsorption of glycerol, preventing its loss in urine, again participating to energy homeostasis. In pancreatic beta cells, it also mediates the efflux of glycerol, regulating its intracellular levels. The polypeptide is Aquaporin-7 (Homo sapiens (Human)).